A 257-amino-acid polypeptide reads, in one-letter code: Transmembrane protein C257L (257 aa).

Transmembrane regions (helical) follow at residues 123-143 and 163-183; these read LELL…FTAL and MMIF…YVLV.

The protein belongs to the asfivirus C257R family.

It localises to the host membrane. It is found in the virion. The sequence is that of Transmembrane protein C257L from African swine fever virus (isolate Warthog/Namibia/Wart80/1980) (ASFV).